The sequence spans 385 residues: Tryptophan--tRNA ligase (385 aa).

The 'HIGH' region signature appears at 89 to 98 (PSSKTMHIGH). Residues 268–272 (KMSAS) carry the 'KMSKS' region motif.

This sequence belongs to the class-I aminoacyl-tRNA synthetase family. Homodimer.

The catalysed reaction is tRNA(Trp) + L-tryptophan + ATP = L-tryptophyl-tRNA(Trp) + AMP + diphosphate + H(+). The chain is Tryptophan--tRNA ligase from Encephalitozoon cuniculi (strain GB-M1) (Microsporidian parasite).